Consider the following 134-residue polypeptide: Protein Turandot E (134 aa).

Positions 1–38 are cleaved as a signal peptide; sequence MSYTRTVHSSTSILKMNSALQISCLLVVLGCLLGSGHC.

Belongs to the Turandot family.

The protein resides in the secreted. Functionally, a humoral factor that may play a role in stress tolerance. The polypeptide is Protein Turandot E (Drosophila simulans (Fruit fly)).